A 236-amino-acid polypeptide reads, in one-letter code: Phosphoribosylaminoimidazole-succinocarboxamide synthase (236 aa).

It belongs to the SAICAR synthetase family.

The catalysed reaction is 5-amino-1-(5-phospho-D-ribosyl)imidazole-4-carboxylate + L-aspartate + ATP = (2S)-2-[5-amino-1-(5-phospho-beta-D-ribosyl)imidazole-4-carboxamido]succinate + ADP + phosphate + 2 H(+). It participates in purine metabolism; IMP biosynthesis via de novo pathway; 5-amino-1-(5-phospho-D-ribosyl)imidazole-4-carboxamide from 5-amino-1-(5-phospho-D-ribosyl)imidazole-4-carboxylate: step 1/2. The polypeptide is Phosphoribosylaminoimidazole-succinocarboxamide synthase (Streptococcus equi subsp. zooepidemicus (strain H70)).